Here is a 386-residue protein sequence, read N- to C-terminus: Succinate--CoA ligase [ADP-forming] subunit beta (386 aa).

The 236-residue stretch at lysine 9–glutamate 244 folds into the ATP-grasp domain. Residues lysine 46, glycine 53–glycine 55, glutamate 99, cysteine 102, and glutamate 107 contribute to the ATP site. Residues asparagine 199 and aspartate 213 each contribute to the Mg(2+) site. Residues asparagine 264 and glycine 321 to methionine 323 each bind substrate.

Belongs to the succinate/malate CoA ligase beta subunit family. As to quaternary structure, heterotetramer of two alpha and two beta subunits. The cofactor is Mg(2+).

The catalysed reaction is succinate + ATP + CoA = succinyl-CoA + ADP + phosphate. The enzyme catalyses GTP + succinate + CoA = succinyl-CoA + GDP + phosphate. The protein operates within carbohydrate metabolism; tricarboxylic acid cycle; succinate from succinyl-CoA (ligase route): step 1/1. In terms of biological role, succinyl-CoA synthetase functions in the citric acid cycle (TCA), coupling the hydrolysis of succinyl-CoA to the synthesis of either ATP or GTP and thus represents the only step of substrate-level phosphorylation in the TCA. The beta subunit provides nucleotide specificity of the enzyme and binds the substrate succinate, while the binding sites for coenzyme A and phosphate are found in the alpha subunit. The polypeptide is Succinate--CoA ligase [ADP-forming] subunit beta (Bacillus cereus (strain G9842)).